The chain runs to 512 residues: Probable multidrug resistance protein EmrY (512 aa).

At 1–8 the chain is on the cytoplasmic side; it reads MAITKSTP. The helical transmembrane segment at 9-29 threads the bilayer; it reads APLTGGTLWCVTIALSLATFM. A topological domain (periplasmic) is located at residue Gln-30. Residues 31 to 51 form a helical membrane-spanning segment; it reads MLDSTISNVAIPTISGFLGAS. Topologically, residues 52–53 are cytoplasmic; the sequence is TD. The chain crosses the membrane as a helical span at residues 54–74; sequence EGTWVITSFGVANAIAIPVTG. Residues 75 to 84 lie on the Periplasmic side of the membrane; it reads RLAQRIGELR. 2 helical membrane passes run 85–105 and 106–126; these read LFLL…LSTN and LDVL…LIPL. Over 127–141 the chain is Periplasmic; the sequence is SQSLLLRNYPPEKRT. The chain crosses the membrane as a helical span at residues 142-162; the sequence is FALALWSMTVIIAPICGPILG. Residues 163-172 lie on the Cytoplasmic side of the membrane; it reads GYICDNFSWG. The helical transmembrane segment at 173–193 threads the bilayer; sequence WIFLINVPMGIIVLTLCLTLL. At 194 to 204 the chain is on the periplasmic side; it reads KGRETETSPVK. A helical transmembrane segment spans residues 205-225; it reads MNLPGLTLLVLGVGGLQIMLD. The Cytoplasmic portion of the chain corresponds to 226–234; sequence KGRDLDWFN. A helical membrane pass occupies residues 235–255; it reads SSTIIILTVVSVISLISLVIW. At 256-273 the chain is on the periplasmic side; sequence ESTSENPILDLSLFKSRN. The chain crosses the membrane as a helical span at residues 274–294; it reads FTIGIVSITCAYLFYSGAIVL. Topologically, residues 295–307 are cytoplasmic; that stretch reads MPQLLQETMGYNA. Residues 308-328 traverse the membrane as a helical segment; the sequence is IWAGLAYAPIGIMPLLISPLI. At 329–338 the chain is on the periplasmic side; sequence GRYGNKIDMR. Residues 339-359 traverse the membrane as a helical segment; that stretch reads LLVTFSFLMYAVCYYWRSVTF. The Cytoplasmic segment spans residues 360–364; the sequence is MPTID. The helical transmembrane segment at 365 to 385 threads the bilayer; sequence FTGIILPQFFQGFAVACFFLP. Residues 386-486 are Periplasmic-facing; sequence LTTISFSGLP…LSISANEIFR (101 aa). Residues 487–507 form a helical membrane-spanning segment; it reads MAAIAFILLTVLVWFAKPPFT. Topologically, residues 508-512 are cytoplasmic; it reads AKGVG.

This sequence belongs to the major facilitator superfamily. EmrB family. Part of the tripartite efflux system EmrYK-TolC, which is composed of an inner membrane transporter, EmrY, a membrane fusion protein, EmrK, and an outer membrane component, TolC. The complex forms a large protein conduit and can translocate molecules across both the inner and outer membranes.

It is found in the cell inner membrane. Its function is as follows. Part of the tripartite efflux system EmrYK-TolC, which confers resistance to various drugs. The sequence is that of Probable multidrug resistance protein EmrY (emrY) from Escherichia coli (strain K12).